We begin with the raw amino-acid sequence, 256 residues long: 5'-nucleotidase SurE (256 aa).

Residues D8, D9, S39, and N91 each coordinate a divalent metal cation.

It belongs to the SurE nucleotidase family. A divalent metal cation serves as cofactor.

It is found in the cytoplasm. It carries out the reaction a ribonucleoside 5'-phosphate + H2O = a ribonucleoside + phosphate. Nucleotidase that shows phosphatase activity on nucleoside 5'-monophosphates. The sequence is that of 5'-nucleotidase SurE from Marinobacter nauticus (strain ATCC 700491 / DSM 11845 / VT8) (Marinobacter aquaeolei).